Reading from the N-terminus, the 152-residue chain is UPF0266 membrane protein YobD (152 aa).

Helical transmembrane passes span 6–26 (LVLILFIAALLAFAIYDQFIM), 45–65 (IDSVIFVGLIVILIYNNVTNH), and 67–87 (ALITTWLLSALALMGFYIFWI).

This sequence belongs to the UPF0266 family.

The protein localises to the cell inner membrane. The chain is UPF0266 membrane protein YobD from Shigella dysenteriae serotype 1 (strain Sd197).